Reading from the N-terminus, the 484-residue chain is Keratin, type I cytoskeletal 14 (484 aa).

The interval 1 to 20 (MATCSRQFTSSSSMKGSCGI) is disordered. Residues 1-120 (MATCSRQFTS…GIGDGLLVGS (120 aa)) form a head region. Residues 121 to 156 (EKVTMQNLNDRLATYLDKVRALEEANTELEVKIRDW) are coil 1A. The region spanning 121 to 432 (EKVTMQNLND…RLLEGEDAHL (312 aa)) is the IF rod domain. Positions 157-174 (YQRQRPTEIKDYSPYFKT) are linker 1. A coil 1B region spans residues 175-266 (IEDLKSKILA…KNHEEEMASM (92 aa)). The segment at 267–289 (RGQVGGDVNVEMDAAPGVDLSRI) is linker 12. The segment at 290–428 (LNEMRDQYEK…ATYRRLLEGE (139 aa)) is coil 2. The tail stretch occupies residues 429–484 (DAHLSSSQFSSSSQFSSGSQSSRDVTSTNRQIRTKVMDVHDGKVVSTHEQVLRTKN). The segment at 431–484 (HLSSSQFSSSSQFSSGSQSSRDVTSTNRQIRTKVMDVHDGKVVSTHEQVLRTKN) is interaction with Type I keratins and keratin filaments. Low complexity predominate over residues 435–450 (SQFSSSSQFSSGSQSS). Residues 435 to 457 (SQFSSSSQFSSGSQSSRDVTSTN) are disordered. Ser-447 is modified (phosphoserine).

It belongs to the intermediate filament family. Heterotetramer of two type I and two type II keratins. Forms a disulfide-linked heterodimer (via 2B domains) with KRT5 (via 2B domains). Forms a heterodimer with KRT1; the interaction is more abundant in the absence of KRT5. Interacts with PLEC isoform 1C, when in a heterodimer with KRT5. Interacts with TRADD and with keratin filaments. Associates with other type I keratins. Interacts with EPPK1. Interacts with KLHL24. Interacts with PKP1 (via N-terminus) and PKP2. Post-translationally, a disulfide bond is formed between rather than within filaments and promotes the formation of a keratin filament cage around the nucleus. In terms of processing, ubiquitinated by the BCR(KLHL24) E3 ubiquitin ligase complex. In terms of tissue distribution, expressed in the corneal epithelium (at protein level). Expressed in the basal layer of the epidermis and the outer root sheath of hair follicles (at protein level). Expressed in the epithelial basal layer in the tail epidermis. Expressed in the parabasal cell row, basal cell layer, and suprabasal epithelial layer of the tongue.

The protein localises to the cytoplasm. It localises to the nucleus. Its function is as follows. The nonhelical tail domain is involved in promoting KRT5-KRT14 filaments to self-organize into large bundles and enhances the mechanical properties involved in resilience of keratin intermediate filaments in vitro. The chain is Keratin, type I cytoskeletal 14 (Krt14) from Mus musculus (Mouse).